A 172-amino-acid polypeptide reads, in one-letter code: MKNARTTLIAAAIAGTLVTTSPAGIANADDAGLDPNAAAGPDAVGFDPNLPPAPDAAPVDTPPAPEDAGFDPNLPPPLAPDFLSPPAEEAPPVPVAYSVNWDAIAQCESGGNWSINTGNGYYGGLRFTAGTWRANGGSGSAANASREEQIRVAENVLRSQGIRAWPVCGRRG.

The signal sequence occupies residues 1-28 (MKNARTTLIAAAIAGTLVTTSPAGIANA). The interval 33-89 (LDPNAAAGPDAVGFDPNLPPAPDAAPVDTPPAPEDAGFDPNLPPPLAPDFLSPPAEE) is disordered. Residues 49–65 (NLPPAPDAAPVDTPPAP) are compositionally biased toward pro residues.

Belongs to the transglycosylase family. Rpf subfamily. As to quaternary structure, interacts with RipA.

Its function is as follows. Factor that stimulates resuscitation of dormant cells. Has peptidoglycan (PG) hydrolytic activity. Active in the pM concentration range. Has little to no effect on actively-growing cells. PG fragments could either directly activate the resuscitation pathway of dormant bacteria or serve as a substrate for endogenous Rpf, resulting in low molecular weight products with resuscitation activity. In terms of biological role, stimulates growth of stationary phase M.bovis (a slow-growing Mycobacterium), reduces the lag phase of diluted fast-growers M.smegmatis and Micrococcus luteus. Sequential gene disruption indicates RpfB and RpfE are higher than RpfD and RpfC in functional hierarchy. The sequence is that of Resuscitation-promoting factor RpfE (rpfE) from Mycobacterium tuberculosis (strain ATCC 25618 / H37Rv).